Reading from the N-terminus, the 559-residue chain is Pentatricopeptide repeat-containing protein At1g08610 (559 aa).

PPR repeat units follow at residues 103–137 (DEET…NQVP), 138–172 (HFPS…GGVP), 173–207 (DTIT…GSPP), 208–242 (DVIT…GCPP), 243–277 (FMIT…GCYP), 278–312 (DIVT…GLEL), 313–347 (NTVT…SYCP), 348–382 (TVIT…KCLP), 383–417 (DIVT…CCPP), 418–452 (GLIT…GIFP), 453–487 (DDIT…GNGI), 488–522 (RGST…GCKP), and 523–557 (DETI…KLLK).

This sequence belongs to the PPR family. P subfamily.

The sequence is that of Pentatricopeptide repeat-containing protein At1g08610 from Arabidopsis thaliana (Mouse-ear cress).